Consider the following 298-residue polypeptide: ATP synthase gamma chain (298 aa).

Belongs to the ATPase gamma chain family. In terms of assembly, F-type ATPases have 2 components, CF(1) - the catalytic core - and CF(0) - the membrane proton channel. CF(1) has five subunits: alpha(3), beta(3), gamma(1), delta(1), epsilon(1). CF(0) has three main subunits: a, b and c.

The protein resides in the cell inner membrane. Produces ATP from ADP in the presence of a proton gradient across the membrane. The gamma chain is believed to be important in regulating ATPase activity and the flow of protons through the CF(0) complex. In Francisella philomiragia subsp. philomiragia (strain ATCC 25017 / CCUG 19701 / FSC 153 / O#319-036), this protein is ATP synthase gamma chain.